The chain runs to 216 residues: DNA gyrase subunit B (216 aa).

In terms of domain architecture, Toprim spans 140–216; that stretch reads SELYLVEGDS…PDKLRYHKII (77 aa).

The protein belongs to the type II topoisomerase GyrB family. In terms of assembly, heterotetramer, composed of two GyrA and two GyrB chains. In the heterotetramer, GyrA contains the active site tyrosine that forms a transient covalent intermediate with DNA, while GyrB binds cofactors and catalyzes ATP hydrolysis.

The protein localises to the cytoplasm. The enzyme catalyses ATP-dependent breakage, passage and rejoining of double-stranded DNA.. Functionally, a type II topoisomerase that negatively supercoils closed circular double-stranded (ds) DNA in an ATP-dependent manner to modulate DNA topology and maintain chromosomes in an underwound state. Negative supercoiling favors strand separation, and DNA replication, transcription, recombination and repair, all of which involve strand separation. Also able to catalyze the interconversion of other topological isomers of dsDNA rings, including catenanes and knotted rings. Type II topoisomerases break and join 2 DNA strands simultaneously in an ATP-dependent manner. This Acinetobacter sp. (strain ATCC 33308 / BD413 ErpE27) protein is DNA gyrase subunit B (gyrB).